We begin with the raw amino-acid sequence, 266 residues long: uncharacterized protein (266 aa).

The next 7 helical transmembrane spans lie at 25–45 (LPSL…GYLL), 64–84 (IGAA…AELI), 111–131 (IVTI…GHLV), 158–178 (VLIS…LSFG), 186–206 (ILGI…HVVA), 209–229 (FVIP…IGNI), and 230–250 (IPAF…IYFI).

It belongs to the FNT transporter (TC 1.A.16) family.

It localises to the cell membrane. This is an uncharacterized protein from Bacillus subtilis (strain 168).